An 85-amino-acid chain; its full sequence is Large ribosomal subunit protein bL27 (85 aa).

Belongs to the bacterial ribosomal protein bL27 family.

This Mycobacteroides abscessus (strain ATCC 19977 / DSM 44196 / CCUG 20993 / CIP 104536 / JCM 13569 / NCTC 13031 / TMC 1543 / L948) (Mycobacterium abscessus) protein is Large ribosomal subunit protein bL27.